The sequence spans 83 residues: Cell division topological specificity factor (83 aa).

The protein belongs to the MinE family.

In terms of biological role, prevents the cell division inhibition by proteins MinC and MinD at internal division sites while permitting inhibition at polar sites. This ensures cell division at the proper site by restricting the formation of a division septum at the midpoint of the long axis of the cell. The protein is Cell division topological specificity factor of Alcanivorax borkumensis (strain ATCC 700651 / DSM 11573 / NCIMB 13689 / SK2).